We begin with the raw amino-acid sequence, 64 residues long: Large ribosomal subunit protein bL35 (64 aa).

This sequence belongs to the bacterial ribosomal protein bL35 family.

This is Large ribosomal subunit protein bL35 from Levilactobacillus brevis (strain ATCC 367 / BCRC 12310 / CIP 105137 / JCM 1170 / LMG 11437 / NCIMB 947 / NCTC 947) (Lactobacillus brevis).